The following is a 1347-amino-acid chain: Protocadherin-11 X-linked (1347 aa).

A signal peptide spans 1–23 (MDLLSGTYIFAVLLACVVFHSGA). At 24–812 (QEKNYTIREE…VSSPTSDYVK (789 aa)) the chain is on the extracellular side. 7 Cadherin domains span residues 26-139 (KNYT…APLF), 140-249 (PATV…HPVF), 250-355 (KETE…VPSI), 362-466 (NPVN…APVF), 467-570 (TQSF…SPVF), 571-673 (THNE…KPVF), and 677-795 (PSNY…APVT). Asn-27, Asn-48, and Asn-54 each carry an N-linked (GlcNAc...) asparagine glycan. Asn-344 carries N-linked (GlcNAc...) asparagine glycosylation. Asn-553 carries an N-linked (GlcNAc...) asparagine glycan. Asn-773 carries N-linked (GlcNAc...) asparagine glycosylation. The chain crosses the membrane as a helical span at residues 813–833 (ILVAAVAGTITVVVVIFITAV). The Cytoplasmic portion of the chain corresponds to 834 to 1347 (VRCRQAPHLK…DSPVMEEHPL (514 aa)). Disordered stretches follow at residues 1057–1091 (LPEG…GYPQ), 1097–1116 (RATP…ESTF), and 1325–1347 (TFTP…EHPL).

The protein resides in the cell membrane. In terms of biological role, potential calcium-dependent cell-adhesion protein. The sequence is that of Protocadherin-11 X-linked (PCDH11X) from Pan paniscus (Pygmy chimpanzee).